Here is a 277-residue protein sequence, read N- to C-terminus: Large ribosomal subunit protein uL2 (277 aa).

The interval 219–277 (TVRGSVMNPNDHPHGGGEGRSPIGHPSPRTPWGKPALGYKTRKNKKYSDRFIVKRRHDK) is disordered.

This sequence belongs to the universal ribosomal protein uL2 family. In terms of assembly, part of the 50S ribosomal subunit. Forms a bridge to the 30S subunit in the 70S ribosome.

Its function is as follows. One of the primary rRNA binding proteins. Required for association of the 30S and 50S subunits to form the 70S ribosome, for tRNA binding and peptide bond formation. It has been suggested to have peptidyltransferase activity; this is somewhat controversial. Makes several contacts with the 16S rRNA in the 70S ribosome. This is Large ribosomal subunit protein uL2 from Clostridium botulinum (strain Okra / Type B1).